Reading from the N-terminus, the 624-residue chain is Sodium/potassium/calcium exchanger 3 (624 aa).

The signal sequence occupies residues 1–25 (RDLLLSQLCFLASVALLLWSLSSLR). Topologically, residues 26 to 88 (EQKELDLMDL…DIFSNEDRRQ (63 aa)) are extracellular. N-linked (GlcNAc...) asparagine glycosylation is found at N52 and N67. Residues 89–109 (GAVVLHVLCAMYMFYALAIVC) form a helical membrane-spanning segment. Topologically, residues 110–133 (DDFFVPSLEKICERLHLSEDVAGA) are cytoplasmic. Residues 130–170 (VAGATFMAAGSSAPELFTSVIGVFITKGDVGVGTIVGSAVF) form an Alpha-1 repeat. Residues 134-154 (TFMAAGSSAPELFTSVIGVFI) traverse the membrane as a helical segment. The Extracellular portion of the chain corresponds to 155–163 (TKGDVGVGT). Residues 164–184 (IVGSAVFNILCIIGVCGLFAG) form a helical membrane-spanning segment. Residues 185 to 191 (QVVALSS) are Cytoplasmic-facing. A helical transmembrane segment spans residues 192-212 (WCLLRDSIYYTLSVVALIVFI). The Extracellular segment spans residues 213–215 (YDE). A helical transmembrane segment spans residues 216-236 (KVSWWESLVLVLMYLIYIIIM). At 237-465 (KYNACIHQCF…WFMVTFASST (229 aa)) the chain is on the cytoplasmic side. A Phosphoserine modification is found at S289. Residues 386-414 (AEADNETENENEDENNENDEEEDEDDDEG) show a composition bias toward acidic residues. Positions 386 to 421 (AEADNETENENEDENNENDEEEDEDDDEGPYTPFDP) are disordered. Residues 466–486 (LWIAAFSYMMVWMVTIIGYTL) form a helical membrane-spanning segment. The Extracellular segment spans residues 487–491 (GIPDV). A helical membrane pass occupies residues 492–512 (IMGITFLAAGTSVPDCMASLI). The stretch at 499 to 530 (AAGTSVPDCMASLIVARQGMGDMAVSNSIGSN) is one Alpha-2 repeat. The Cytoplasmic portion of the chain corresponds to 513 to 530 (VARQGMGDMAVSNSIGSN). The helical transmembrane segment at 531 to 551 (VFDILIGLGLPWALQTLAVDY) threads the bilayer. Topologically, residues 552 to 561 (GSYIRLNSRG) are extracellular. Residues 562-582 (LIYSVGLLLASVFVTVFGVHL) traverse the membrane as a helical segment. Topologically, residues 583–596 (NKWQLDKKLGCGCL) are cytoplasmic. The helical transmembrane segment at 597–617 (FLYGVFLCFSIMTEFNVFTFV) threads the bilayer. At 618 to 624 (NLPMCGD) the chain is on the extracellular side.

The protein belongs to the Ca(2+):cation antiporter (CaCA) (TC 2.A.19) family. SLC24A subfamily. In terms of tissue distribution, abundant in the brain. Expressed at low levels in the aorta, uterus and intestine.

It is found in the cell membrane. It carries out the reaction Ca(2+)(out) + K(+)(out) + 4 Na(+)(in) = Ca(2+)(in) + K(+)(in) + 4 Na(+)(out). Functionally, calcium, potassium:sodium antiporter that transports 1 Ca(2+) and 1 K(+) in exchange for 4 Na(+). The protein is Sodium/potassium/calcium exchanger 3 (Slc24a3) of Rattus norvegicus (Rat).